Reading from the N-terminus, the 463-residue chain is Adenosylhomocysteinase (463 aa).

Substrate is bound by residues threonine 54, aspartate 129, and glutamate 189. Residue 190–192 (TTT) participates in NAD(+) binding. 2 residues coordinate substrate: lysine 219 and aspartate 223. Residues asparagine 224, 253 to 258 (GYGDVG), glutamate 276, asparagine 311, 332 to 334 (IGH), and asparagine 377 contribute to the NAD(+) site.

It belongs to the adenosylhomocysteinase family. Requires NAD(+) as cofactor.

It localises to the cytoplasm. It carries out the reaction S-adenosyl-L-homocysteine + H2O = L-homocysteine + adenosine. It participates in amino-acid biosynthesis; L-homocysteine biosynthesis; L-homocysteine from S-adenosyl-L-homocysteine: step 1/1. May play a key role in the regulation of the intracellular concentration of adenosylhomocysteine. This Caulobacter vibrioides (strain ATCC 19089 / CIP 103742 / CB 15) (Caulobacter crescentus) protein is Adenosylhomocysteinase.